The sequence spans 449 residues: Glucose-6-phosphate isomerase 1 (449 aa).

Phosphothreonine is present on Thr-38. Glu-290 acts as the Proton donor in catalysis. Residues His-311 and Lys-425 contribute to the active site.

The protein belongs to the GPI family. As to quaternary structure, homodimer.

The protein localises to the cytoplasm. The enzyme catalyses alpha-D-glucose 6-phosphate = beta-D-fructose 6-phosphate. It participates in carbohydrate biosynthesis; gluconeogenesis. The protein operates within carbohydrate degradation; glycolysis; D-glyceraldehyde 3-phosphate and glycerone phosphate from D-glucose: step 2/4. Functionally, catalyzes the reversible isomerization of glucose-6-phosphate to fructose-6-phosphate. The chain is Glucose-6-phosphate isomerase 1 from Geobacillus stearothermophilus (Bacillus stearothermophilus).